We begin with the raw amino-acid sequence, 479 residues long: Kynurenine 3-monooxygenase (479 aa).

It belongs to the aromatic-ring hydroxylase family. KMO subfamily. The cofactor is FAD.

Its subcellular location is the mitochondrion outer membrane. The enzyme catalyses L-kynurenine + NADPH + O2 + H(+) = 3-hydroxy-L-kynurenine + NADP(+) + H2O. The protein operates within cofactor biosynthesis; NAD(+) biosynthesis; quinolinate from L-kynurenine: step 1/3. Functionally, catalyzes the hydroxylation of L-kynurenine (L-Kyn) to form 3-hydroxy-L-kynurenine (L-3OHKyn). Required for synthesis of quinolinic acid. The polypeptide is Kynurenine 3-monooxygenase (Chaetomium globosum (strain ATCC 6205 / CBS 148.51 / DSM 1962 / NBRC 6347 / NRRL 1970) (Soil fungus)).